A 121-amino-acid chain; its full sequence is Basic phospholipase A2 homolog (121 aa).

Disulfide bonds link Cys-26–Cys-115, Cys-28–Cys-44, Cys-43–Cys-95, Cys-49–Cys-121, Cys-50–Cys-88, Cys-57–Cys-81, and Cys-75–Cys-86.

The protein belongs to the phospholipase A2 family. Group II subfamily. K49 sub-subfamily. In terms of assembly, homodimer. Expressed by the venom gland.

It localises to the secreted. In terms of biological role, snake venom phospholipase A2 homolog that lacks enzymatic activity, but has myotoxic and cytolytic activities. This is Basic phospholipase A2 homolog from Metlapilcoatlus nummifer (Mexican jumping pitviper).